Consider the following 365-residue polypeptide: uncharacterized protein (365 aa).

This is an uncharacterized protein from Archaeoglobus fulgidus (strain ATCC 49558 / DSM 4304 / JCM 9628 / NBRC 100126 / VC-16).